A 372-amino-acid polypeptide reads, in one-letter code: tRNA-specific 2-thiouridylase MnmA (372 aa).

ATP contacts are provided by residues 7–14 (GLSGGVDS) and M33. The segment at 104–106 (NPD) is interaction with target base in tRNA. C109 acts as the Nucleophile in catalysis. C109 and C202 are joined by a disulfide. Residue G134 coordinates ATP. Positions 152-154 (KDQ) are interaction with tRNA. C202 serves as the catalytic Cysteine persulfide intermediate. Residues 310 to 311 (RY) form an interaction with tRNA region.

It belongs to the MnmA/TRMU family.

It localises to the cytoplasm. It carries out the reaction S-sulfanyl-L-cysteinyl-[protein] + uridine(34) in tRNA + AH2 + ATP = 2-thiouridine(34) in tRNA + L-cysteinyl-[protein] + A + AMP + diphosphate + H(+). In terms of biological role, catalyzes the 2-thiolation of uridine at the wobble position (U34) of tRNA, leading to the formation of s(2)U34. The protein is tRNA-specific 2-thiouridylase MnmA of Mesomycoplasma hyopneumoniae (strain 7448) (Mycoplasma hyopneumoniae).